The following is a 358-amino-acid chain: MARLLLLLVGVLIACAAGARAGSEFLAEDNPIRQVVDGMHELESSILKAVGNSRRAFSFARFAHRYGKSYESSEEIQKRFQVYSENLRMIRSHNKKGLSYSMGVNEFSDLTWDEFKKHRLGAAQNCSATRRGNHKLTSAILPDSKDWRESGIVSPVKSQGSCGSCWTFSSTGALEAAYAQAFGKGISLSEQQLVDCAGAFNNFGCNGGLPSQAFEYIKYNGGLMTEEAYPYTGHDGECKYSSENAAVQVLDSVNITLGAEDELKHAVALVRPVSVAFEVVDGFRSYNGGVYTSTTCGSDPMDVNHAVLAVGYGVEGGVPYWLIKNSWGADWGDQGYFKMEMGKNMCGVATCASYPVVA.

The first 21 residues, 1 to 21 (MARLLLLLVGVLIACAAGARA), serve as a signal peptide directing secretion. Positions 22 to 140 (GSEFLAEDNP…RGNHKLTSAI (119 aa)) are cleaved as a propeptide — activation peptide. Asparagine 125 is a glycosylation site (N-linked (GlcNAc...) asparagine). 2 disulfides stabilise this stretch: cysteine 162–cysteine 205 and cysteine 196–cysteine 238. Cysteine 165 is an active-site residue. Asparagine 254 carries N-linked (GlcNAc...) asparagine glycosylation. An intrachain disulfide couples cysteine 296 to cysteine 346. Catalysis depends on residues histidine 305 and asparagine 325.

It belongs to the peptidase C1 family.

It carries out the reaction (E)-ferulate + H2O = vanillin + acetate. The catalysed reaction is 4-O-beta-D-glucosyl-trans-ferulate + H2O = 4-O-beta-D-glucosyl-vanillin + acetate. Its pathway is aromatic compound metabolism; phenylpropanoid biosynthesis. Involved in the biosynthesis of vanillin and derivative natural products. Catalyzes the double carbon bond cleavage of ferulic acid to vanillin and of respective glucosides. The polypeptide is Vanillin synthase (Glechoma hederacea (Ground-ivy)).